The chain runs to 98 residues: NADH-ubiquinone oxidoreductase chain 4L (98 aa).

3 helical membrane-spanning segments follow: residues 1–21 (MTMV…GLLM), 29–49 (SLLC…VTIL), and 61–81 (IILL…LVMV).

This sequence belongs to the complex I subunit 4L family. In terms of assembly, core subunit of respiratory chain NADH dehydrogenase (Complex I) which is composed of 45 different subunits.

It localises to the mitochondrion inner membrane. It catalyses the reaction a ubiquinone + NADH + 5 H(+)(in) = a ubiquinol + NAD(+) + 4 H(+)(out). Core subunit of the mitochondrial membrane respiratory chain NADH dehydrogenase (Complex I) which catalyzes electron transfer from NADH through the respiratory chain, using ubiquinone as an electron acceptor. Part of the enzyme membrane arm which is embedded in the lipid bilayer and involved in proton translocation. This Neomonachus schauinslandi (Hawaiian monk seal) protein is NADH-ubiquinone oxidoreductase chain 4L (MT-ND4L).